The chain runs to 511 residues: Thioredoxin reductase 2, mitochondrial (511 aa).

The transit peptide at 1–21 (MAALRGAAARFRGRAPGGARG) directs the protein to the mitochondrion. 29-58 (DLLVIGGGSGGLACAKEAAQLGKKVAVLDY) is an FAD binding site. A disulfide bridge links C74 with C79. An N6-succinyllysine modification is found at K316. The Proton acceptor role is filled by H484. The segment at residues 509–510 (CU) is a cross-link (cysteinyl-selenocysteine (Cys-Sec)). U510 is a non-standard amino acid (selenocysteine).

It belongs to the class-I pyridine nucleotide-disulfide oxidoreductase family. As to quaternary structure, homodimer. FAD serves as cofactor.

Its subcellular location is the mitochondrion. The catalysed reaction is [thioredoxin]-dithiol + NADP(+) = [thioredoxin]-disulfide + NADPH + H(+). Inhibited by 1-chloro-2,4-dinitrobenzene and by zinc, calcium, magnesium and Fe(2+) ions. Its function is as follows. Involved in the control of reactive oxygen species levels and the regulation of mitochondrial redox homeostasis. Maintains thioredoxin in a reduced state. May play a role in redox-regulated cell signaling. The chain is Thioredoxin reductase 2, mitochondrial (TXNRD2) from Bos taurus (Bovine).